Reading from the N-terminus, the 438-residue chain is Glutamate-1-semialdehyde 2,1-aminomutase (438 aa).

Lys272 is modified (N6-(pyridoxal phosphate)lysine).

This sequence belongs to the class-III pyridoxal-phosphate-dependent aminotransferase family. HemL subfamily. Homodimer. It depends on pyridoxal 5'-phosphate as a cofactor.

It is found in the cytoplasm. The enzyme catalyses (S)-4-amino-5-oxopentanoate = 5-aminolevulinate. The protein operates within porphyrin-containing compound metabolism; protoporphyrin-IX biosynthesis; 5-aminolevulinate from L-glutamyl-tRNA(Glu): step 2/2. It functions in the pathway porphyrin-containing compound metabolism; chlorophyll biosynthesis. The chain is Glutamate-1-semialdehyde 2,1-aminomutase from Chloroflexus aggregans (strain MD-66 / DSM 9485).